The sequence spans 337 residues: tRNA N6-adenosine threonylcarbamoyltransferase (337 aa).

2 residues coordinate Fe cation: His111 and His115. Substrate contacts are provided by residues 134–138 (LVSGG), Asp167, Gly180, and Asn272. Asp300 is a binding site for Fe cation.

Belongs to the KAE1 / TsaD family. Requires Fe(2+) as cofactor.

The protein resides in the cytoplasm. It catalyses the reaction L-threonylcarbamoyladenylate + adenosine(37) in tRNA = N(6)-L-threonylcarbamoyladenosine(37) in tRNA + AMP + H(+). Required for the formation of a threonylcarbamoyl group on adenosine at position 37 (t(6)A37) in tRNAs that read codons beginning with adenine. Is involved in the transfer of the threonylcarbamoyl moiety of threonylcarbamoyl-AMP (TC-AMP) to the N6 group of A37, together with TsaE and TsaB. TsaD likely plays a direct catalytic role in this reaction. The sequence is that of tRNA N6-adenosine threonylcarbamoyltransferase from Enterobacter sp. (strain 638).